The sequence spans 405 residues: Terpene cyclase pbrA (405 aa).

The Mg(2+) site is built by Asp103, Glu168, Asn229, Ser233, Glu237, and Asp241. Positions 103 to 108 (DDEISS) match the D(D/E)XX(D/E) motif motif. The short motif at 227–237 (LVNDLFSFYKE) is the NSE motif element. The WxxxxxRY motif motif lies at 316-323 (EDLGGSSA).

It belongs to the trichodiene synthase family. Mg(2+) is required as a cofactor.

It participates in secondary metabolite biosynthesis; terpenoid biosynthesis. Terpene cyclase; part of the gene cluster that mediates the biosynthesis of the sesquiterpenoid aspterric acid (AA), an inhibitor of dihydroxy-acid dehydratase (DHAD) effective as an herbicide. PbrA cyclizes farnesyl diphosphate (FPP) to produce (-)-daucane. The cytochrome P450 monooxygenase pbrBB then converts (-)-daucane into the alpha-epoxy carboxylate intermediate which is further converted into the tricyclic aspterric acid by the cytochrome P450 monooxygenase pbrC. This Penicillium brasilianum protein is Terpene cyclase pbrA.